The following is a 172-amino-acid chain: MSAQVSLELHHRISQFLFHEASLLDDWKFRDWLAQLDEEIRYTMRTTVNAQTRDRRKGVQPPTTWIFNDTKDQLERRIARLETGMAWAEEPPSRTRHLISNCQVSETDIPNVFAVRVNYLLYRAQKERDETFYVGTRFDKVRRLEYDNWRLLERDIVLDQAVITSHNLSVLF.

The protein belongs to the bacterial ring-hydroxylating dioxygenase beta subunit family. In terms of assembly, this dioxygenase system consists of four proteins: the two subunits of the hydroxylase component (HcaE and HcaF), a ferredoxin (HcaC) and a ferredoxin reductase (HcaD).

It carries out the reaction 3-phenylpropanoate + NADH + O2 + H(+) = 3-(cis-5,6-dihydroxycyclohexa-1,3-dien-1-yl)propanoate + NAD(+). The enzyme catalyses (E)-cinnamate + NADH + O2 + H(+) = (2E)-3-(cis-5,6-dihydroxycyclohexa-1,3-dien-1-yl)prop-2-enoate + NAD(+). The protein operates within aromatic compound metabolism; 3-phenylpropanoate degradation. Functionally, part of the multicomponent 3-phenylpropionate dioxygenase. Converts 3-phenylpropionic acid (PP) and cinnamic acid (CI) into 3-phenylpropionate-dihydrodiol (PP-dihydrodiol) and cinnamic acid-dihydrodiol (CI-dihydrodiol), respectively. The protein is 3-phenylpropionate/cinnamic acid dioxygenase subunit beta of Shigella flexneri serotype 5b (strain 8401).